The sequence spans 513 residues: Calcium-dependent protein kinase 2 (513 aa).

Positions 65–323 constitute a Protein kinase domain; that stretch reads YSFGKELGRG…SAQVLQHQWL (259 aa). Residues 71-79 and K94 each bind ATP; that span reads LGRGQFGVT. Residue D189 is the Proton acceptor of the active site. The segment at 329 to 359 is autoinhibitory domain; that stretch reads ASDKPIDSAVLSRMKQFRAMNKLKKMALKVI. EF-hand domains follow at residues 366-401, 402-437, 438-473, and 478-508; these read EEIK…LGSK, LSEA…RHKL, ERDE…HEMG, and IREI…GMQQ. 19 residues coordinate Ca(2+): D379, D381, S383, T385, E390, D415, D417, N419, S421, E426, D451, D453, S455, E462, D486, D488, D490, R492, and E497.

This sequence belongs to the protein kinase superfamily. Ser/Thr protein kinase family. CDPK subfamily.

The catalysed reaction is L-seryl-[protein] + ATP = O-phospho-L-seryl-[protein] + ADP + H(+). It catalyses the reaction L-threonyl-[protein] + ATP = O-phospho-L-threonyl-[protein] + ADP + H(+). Activated by calcium. Autophosphorylation may play an important role in the regulation of the kinase activity. Functionally, may play a role in signal transduction pathways that involve calcium as a second messenger. The chain is Calcium-dependent protein kinase 2 (CPK2) from Zea mays (Maize).